Reading from the N-terminus, the 350-residue chain is Uroporphyrinogen decarboxylase (350 aa).

Substrate contacts are provided by residues 28-32 (RQAGR), phenylalanine 47, aspartate 78, tyrosine 155, serine 210, and histidine 325.

The protein belongs to the uroporphyrinogen decarboxylase family. Homodimer.

The protein resides in the cytoplasm. The enzyme catalyses uroporphyrinogen III + 4 H(+) = coproporphyrinogen III + 4 CO2. The protein operates within porphyrin-containing compound metabolism; protoporphyrin-IX biosynthesis; coproporphyrinogen-III from 5-aminolevulinate: step 4/4. Functionally, catalyzes the decarboxylation of four acetate groups of uroporphyrinogen-III to yield coproporphyrinogen-III. In Synechocystis sp. (strain ATCC 27184 / PCC 6803 / Kazusa), this protein is Uroporphyrinogen decarboxylase.